A 282-amino-acid chain; its full sequence is MILIDGKSLSKDLKERLATQVQEYKHHTAITPKLVAIIVGNDPASKTYVASKEKACAQVGIDSQVITLPEHTTESELLELIDQLNNDSSVHAILVQLPLPAHINKNNVIYSIKPEKDVDGFHPTNVGRLQLRDKKCLESCTPKGIMTMLREYGIKTEGAYAVVVGASNVVGKPVSQLLLNAKATVTTCHRFTTDLKSHTTKADILIVAVGKPNFITADMVKEGAVVIDVGINHVDGKIVGDVDFAAVKDKVAAITPVPGGVGPMTITELLYNTFQCAQELNR.

Residues 165-167 (GAS) and I231 each bind NADP(+).

It belongs to the tetrahydrofolate dehydrogenase/cyclohydrolase family. In terms of assembly, homodimer.

It carries out the reaction (6R)-5,10-methylene-5,6,7,8-tetrahydrofolate + NADP(+) = (6R)-5,10-methenyltetrahydrofolate + NADPH. It catalyses the reaction (6R)-5,10-methenyltetrahydrofolate + H2O = (6R)-10-formyltetrahydrofolate + H(+). It functions in the pathway one-carbon metabolism; tetrahydrofolate interconversion. In terms of biological role, catalyzes the oxidation of 5,10-methylenetetrahydrofolate to 5,10-methenyltetrahydrofolate and then the hydrolysis of 5,10-methenyltetrahydrofolate to 10-formyltetrahydrofolate. In Francisella tularensis subsp. tularensis (strain FSC 198), this protein is Bifunctional protein FolD.